Consider the following 555-residue polypeptide: Solute carrier family 22 member 2 (555 aa).

Over 1-21 (MPTTVDDVLEHGGEFHFFQKQ) the chain is Cytoplasmic. The chain crosses the membrane as a helical span at residues 22 to 42 (MFFLLALLSATFTPIYVGIVF). Over 43-150 (LGFTPDHRCR…LVCANSWMLD (108 aa)) the chain is Extracellular. N-linked (GlcNAc...) asparagine glycosylation occurs at N72. Residues 151–171 (LFQASVNVGFFFGSVSIGYIA) traverse the membrane as a helical segment. Topologically, residues 172-177 (DRFGRK) are cytoplasmic. The helical transmembrane segment at 178 to 198 (LCLLTTVLINAAAGVLMAISP) threads the bilayer. Over 199 to 210 (TYTWMLIFRLIQ) the chain is Extracellular. A helical membrane pass occupies residues 211-231 (GLVSKAGWLIGYILITEFVGR). Residues 232-238 (RYRRTVG) are Cytoplasmic-facing. Residues 239 to 259 (IFYQVAYTVGLLVLAGVAYAL) traverse the membrane as a helical segment. The Extracellular segment spans residues 260–263 (PHWR). Residues 264 to 284 (WLQFTVTLPNFFFLLYYWCIP) traverse the membrane as a helical segment. Residues 284 to 288 (PESPR) carry the Proline-rich sequence motif. At 285–348 (ESPRWLISQN…VRTPQIRKHT (64 aa)) the chain is on the cytoplasmic side. The helical transmembrane segment at 349–369 (MILMYNWFTSSVLYQGLIMHM) threads the bilayer. Topologically, residues 370–375 (GLAGDN) are extracellular. Residues 376–396 (IYLDFFYSALVEFPAAFMIIV) form a helical membrane-spanning segment. The Cytoplasmic portion of the chain corresponds to 397–404 (TIDRIGRR). A helical transmembrane segment spans residues 405-425 (YPWAASNMVAGAACLASVFIP). Topologically, residues 426 to 432 (GDLQWLK) are extracellular. Residues 433 to 453 (IIISCLGRMGITMAYEIVRLV) traverse the membrane as a helical segment. At 454 to 464 (NAELYPTFIRN) the chain is on the cytoplasmic side. The chain crosses the membrane as a helical span at residues 465 to 485 (LGVHICSSMCDIGGIITPFLV). Topologically, residues 486–494 (YRLTNIWLE) are extracellular. A helical transmembrane segment spans residues 495-515 (LPLMVFGVLGLVAGGLVLLLP). Over 516–555 (ETKGKALPETIEEAENMQRPRKNKEKMIYLQVQKLDIPLN) the chain is Cytoplasmic.

Belongs to the major facilitator (TC 2.A.1) superfamily. Organic cation transporter (TC 2.A.1.19) family. Tyrosine phosphorylated.

The protein resides in the basolateral cell membrane. Its subcellular location is the basal cell membrane. The protein localises to the apical cell membrane. It carries out the reaction (R)-noradrenaline(out) = (R)-noradrenaline(in). It catalyses the reaction (R)-adrenaline(out) = (R)-adrenaline(in). The catalysed reaction is serotonin(out) = serotonin(in). The enzyme catalyses dopamine(out) = dopamine(in). It carries out the reaction histamine(out) = histamine(in). It catalyses the reaction thiamine(in) = thiamine(out). The catalysed reaction is creatinine(in) = creatinine(out). The enzyme catalyses 1-methylnicotinamide(out) = 1-methylnicotinamide(in). It carries out the reaction guanidine(out) = guanidine(in). It catalyses the reaction choline(out) = choline(in). The catalysed reaction is agmatine(out) = agmatine(in). The enzyme catalyses putrescine(out) = putrescine(in). It carries out the reaction spermidine(in) = spermidine(out). It catalyses the reaction tyramine(in) = tyramine(out). The catalysed reaction is L-histidyl-L-proline diketopiperazine(in) = L-histidyl-L-proline diketopiperazine(out). The enzyme catalyses (R)-salsolinol(in) = (R)-salsolinol(out). It carries out the reaction N-methyl-(R)-salsolinol(in) = N-methyl-(R)-salsolinol(out). It catalyses the reaction acetylcholine(in) = acetylcholine(out). The catalysed reaction is prostaglandin F2alpha(out) = prostaglandin F2alpha(in). The enzyme catalyses prostaglandin E2(out) = prostaglandin E2(in). With respect to regulation, tyrosine phosphorylation of the transporter leads to activation of the transport activity. Inhibited by cGMP, most likely through a cGMP-binding protein that interacts with OCT2. Electrogenic voltage-dependent transporter that mediates the transport of a variety of organic cations such as endogenous bioactive amines, cationic drugs and xenobiotics. Functions as a Na(+)-independent, bidirectional uniporter. Cation cellular uptake or release is driven by the electrochemical potential, i.e. membrane potential and concentration gradient. However, may also engage electroneutral cation exchange when saturating concentrations of cation substrates are reached. Predominantly expressed at the basolateral membrane of hepatocytes and proximal tubules and involved in the uptake and disposition of cationic compounds by hepatic and renal clearance from the blood flow. Implicated in monoamine neurotransmitters uptake such as histamine, dopamine, adrenaline/epinephrine, noradrenaline/norepinephrine, serotonin and tyramine, thereby supporting a physiological role in the central nervous system by regulating interstitial concentrations of neurotransmitters. Also capable of transporting dopaminergic neuromodulators cyclo(his-pro), salsolinol and N-methyl-salsolinol, thereby involved in the maintenance of dopaminergic cell integrity in the central nervous system. Mediates the bidirectional transport of acetylcholine (ACh) at the apical membrane of ciliated cell in airway epithelium, thereby playing a role in luminal release of ACh from bronchial epithelium. Also transports guanidine and endogenous monoamines such as vitamin B1/thiamine, creatinine and N-1-methylnicotinamide (NMN). Mediates the uptake and efflux of quaternary ammonium compound choline. Mediates the bidirectional transport of polyamine agmatine and the uptake of polyamines putrescine and spermidine. Able to transport non-amine endogenous compounds such as prostaglandin E2 (PGE2) and prostaglandin F2-alpha (PGF2-alpha). Also involved in the uptake of xenobiotic 4-(4-(dimethylamino)styryl)-N-methylpyridinium (ASP). May contribute to regulate the transport of organic compounds in testis across the blood-testis-barrier. The protein is Solute carrier family 22 member 2 (SLC22A2) of Pongo abelii (Sumatran orangutan).